The following is a 239-amino-acid chain: Orotidine 5'-phosphate decarboxylase (239 aa).

Substrate contacts are provided by residues Asp-15, Lys-37, Asp-64 to Thr-73, Thr-126, Arg-187, Gln-196, Gly-216, and Arg-217. The active-site Proton donor is Lys-66.

The protein belongs to the OMP decarboxylase family. Type 1 subfamily. Homodimer.

It catalyses the reaction orotidine 5'-phosphate + H(+) = UMP + CO2. It participates in pyrimidine metabolism; UMP biosynthesis via de novo pathway; UMP from orotate: step 2/2. Catalyzes the decarboxylation of orotidine 5'-monophosphate (OMP) to uridine 5'-monophosphate (UMP). This is Orotidine 5'-phosphate decarboxylase from Geobacter sulfurreducens (strain ATCC 51573 / DSM 12127 / PCA).